The sequence spans 995 residues: Zinc finger protein ZFPM1 (995 aa).

Over residues 1–14 (MSRRKQSNPRQIKR) the composition is skewed to basic residues. The disordered stretch occupies residues 1 to 103 (MSRRKQSNPR…EAAMASPWSG (103 aa)). The span at 15–36 (SLRDMEAGEEAKAMDSSPKEQE) shows a compositional bias: basic and acidic residues. 2 stretches are compositionally biased toward acidic residues: residues 67–78 (SPEDPEDMEGQE) and 86–95 (EEKEEKEEEA). Phosphoserine is present on residues S99 and S143. Residues 249–282 (VINKDVFPCKDCGIWYRSERNLQAHLLYYCASRQ) form a CCHC FOG-type 1 zinc finger. 4 residues coordinate Zn(2+): C257, C260, H273, and C278. At S286 the chain carries Phosphoserine. C2H2-type zinc fingers lie at residues 303–327 (RVCP…MRSH), 333–355 (FVCL…LKVH), and 361–384 (GVCH…VTNH). The segment at 343 to 354 (TTKANCERHLKV) is interaction with TACC3. S397, S497, and S500 each carry phosphoserine. Positions 424-526 (PLVPADKAPT…SSPGPGELTM (103 aa)) are disordered. Residues 509 to 525 (ELSSPTPGSSPGPGELT) are compositionally biased toward low complexity. A CCHC FOG-type 2 zinc finger spans residues 584-617 (FSGTKGATCFECEITFNNINNFYVHKRLYCSGRR). Zn(2+)-binding residues include C592, C595, H608, and C613. The tract at residues 616–694 (RRAPEDPPTV…SVDDAEDDPS (79 aa)) is disordered. Residues 630-652 (AATGPARAPAGAAAEPDPSRSSP) are compositionally biased toward low complexity. S651 and S684 each carry phosphoserine. A CCHC FOG-type 3 zinc finger spans residues 690–723 (EDDPSRTLCEACNIRFSRHETYTVHKRYYCASRH). Residues C698, C701, H714, and C719 each coordinate Zn(2+). The disordered stretch occupies residues 721–827 (SRHDPPPRRP…PRRQSPDAPT (107 aa)). Composition is skewed to pro residues over residues 728 to 740 (RRPP…PGPA) and 764 to 779 (GAPP…PVVP). A compositionally biased stretch (low complexity) spans 785–800 (LPSSPRPGSASAGPAP). S803 bears the Phosphoserine mark. Residues 811–817 (PIDLSKR) form an interaction with CTBP2 region. At S822 the chain carries Phosphoserine. The CCHC FOG-type 4 zinc-finger motif lies at 830 to 863 (PALADYHECTACRVSFHSLEAYLAHKKYSCPAAP). The Zn(2+) site is built by C838, C841, H854, and C859. The segment at 868–891 (ALCPYCPPNGRVRGDLVEHLRQAH) adopts a C2H2-type 4 zinc-finger fold. The segment at 892–960 (GLQVAKPAAS…APAPAPGGGG (69 aa)) is disordered. A compositionally biased stretch (basic and acidic residues) spans 908–922 (TPAERAPRDSPDGRA). Residues S925 and S927 each carry the phosphoserine modification. The CCHC FOG-type 5 zinc finger occupies 957 to 990 (GGGGGHRYCRLCNIRFSSLSTFIAHKKYYCSSHA). Zn(2+) contacts are provided by C965, C968, H981, and C986.

It belongs to the FOG (Friend of GATA) family. In terms of assembly, interacts with the N-terminal zinc-finger of GATA1, GATA2 and GATA3. Interacts with corepressor CTBP2; this interaction is however not essential for corepressor activity in erythropoiesis. Interacts with TACC3. Mainly expressed in hematopoietic tissues. Expressed in the spleen, a primary site of hematopoiesis in the adult mouse, as well as in the liver and testis, but not in the heart, brain, lung, kidney, or skeletal muscle. Among hematopoietic cell lines, it is strongly expressed in erythroid and megakaryocytic cell lines. Expressed at low level in several lymphoid and early myeloid cell lines. Not expressed in mast cell and macrophage lines. Expressed in the heart, where it colocalizes with GATA4, GATA5 and GATA6.

The protein resides in the nucleus. Its function is as follows. Transcription regulator that plays an essential role in erythroid and megakaryocytic cell differentiation. Essential cofactor that acts via the formation of a heterodimer with transcription factors of the GATA family GATA1, GATA2 and GATA3. Such heterodimer can both activate or repress transcriptional activity, depending on the cell and promoter context. The heterodimer formed with GATA proteins is essential to activate expression of genes such as NFE2, ITGA2B, alpha- and beta-globin, while it represses expression of KLF1. May be involved in regulation of some genes in gonads. May also be involved in cardiac development, in a non-redundant way with ZFPM2/FOG2. This is Zinc finger protein ZFPM1 (Zfpm1) from Mus musculus (Mouse).